The following is a 955-amino-acid chain: Translation initiation factor IF-2 (955 aa).

Residues 49-352 (AFSQSSESTE…QAPSFGGVKI (304 aa)) form a disordered region. Residues 77 to 88 (PQQQTKASAPSA) show a composition bias toward low complexity. Composition is skewed to pro residues over residues 95–121 (PAVPKPGPGLKPGPRPVPKPGPRPGPR), 149–159 (RPVPKPGPRPG), 188–202 (RPGPRPHPGMMPPRP), and 209–223 (PPRPQAPRPQAPRPG). Residues 225 to 235 (GTAGGRPGSSA) are compositionally biased toward gly residues. Pro residues predominate over residues 238–264 (PPRPVPRPGPRPSPMNMPASRPTPPGG). Gly residues predominate over residues 273-322 (SGGGRGRGGGGGAGPRGGGAGGGAPRTGFGGRPGGGRGRGGTAGAFGRPG). The segment covering 326 to 335 (SRSRKSKKQR) has biased composition (basic residues). One can recognise a tr-type G domain in the interval 448 to 620 (PRAPVVTVMG…IILTADAELD (173 aa)). A G1 region spans residues 457–464 (GHVDHGKT). 457 to 464 (GHVDHGKT) provides a ligand contact to GTP. A G2 region spans residues 482–486 (GITQH). Residues 507–510 (DTPG) are G3. GTP-binding positions include 507 to 511 (DTPGH) and 561 to 564 (NKID). Residues 561–564 (NKID) form a G4 region. Residues 597-599 (SAK) form a G5 region.

The protein belongs to the TRAFAC class translation factor GTPase superfamily. Classic translation factor GTPase family. IF-2 subfamily.

Its subcellular location is the cytoplasm. One of the essential components for the initiation of protein synthesis. Protects formylmethionyl-tRNA from spontaneous hydrolysis and promotes its binding to the 30S ribosomal subunits. Also involved in the hydrolysis of GTP during the formation of the 70S ribosomal complex. The polypeptide is Translation initiation factor IF-2 (Thermobifida fusca (strain YX)).